Reading from the N-terminus, the 334-residue chain is Beta-hexosaminidase (334 aa).

Substrate contacts are provided by residues Asp60, Arg68, Arg133, and 163-164; that span reads KH. The active-site Proton donor/acceptor is the His176. Asp247 serves as the catalytic Nucleophile.

The protein belongs to the glycosyl hydrolase 3 family. NagZ subfamily.

It is found in the cytoplasm. It carries out the reaction Hydrolysis of terminal non-reducing N-acetyl-D-hexosamine residues in N-acetyl-beta-D-hexosaminides.. It participates in cell wall biogenesis; peptidoglycan recycling. Functionally, plays a role in peptidoglycan recycling by cleaving the terminal beta-1,4-linked N-acetylglucosamine (GlcNAc) from peptide-linked peptidoglycan fragments, giving rise to free GlcNAc, anhydro-N-acetylmuramic acid and anhydro-N-acetylmuramic acid-linked peptides. The chain is Beta-hexosaminidase from Xanthomonas oryzae pv. oryzae (strain MAFF 311018).